The chain runs to 160 residues: Cytochrome b6-f complex subunit 4 (160 aa).

A run of 3 helical transmembrane segments spans residues 36 to 56 (LLYIFPVVILGTIACTVGLAV), 95 to 115 (LLGVLLMAAVPAGLLTVPFLE), and 131 to 151 (TVFLIGTVVSIWLGIGAALPI).

It belongs to the cytochrome b family. PetD subfamily. As to quaternary structure, the 4 large subunits of the cytochrome b6-f complex are cytochrome b6, subunit IV (17 kDa polypeptide, petD), cytochrome f and the Rieske protein, while the 4 small subunits are petG, petL, petM and petN. The complex functions as a dimer.

The protein resides in the plastid. It localises to the chloroplast thylakoid membrane. Functionally, component of the cytochrome b6-f complex, which mediates electron transfer between photosystem II (PSII) and photosystem I (PSI), cyclic electron flow around PSI, and state transitions. The polypeptide is Cytochrome b6-f complex subunit 4 (Physcomitrium patens (Spreading-leaved earth moss)).